A 1624-amino-acid polypeptide reads, in one-letter code: Reverse gyrase (1624 aa).

The segment at 1 to 42 adopts an RG N-terminal-type zinc-finger fold; that stretch reads MKAIYRGMCPNCRGAITDERLSNKNPCEGCLSEPILSEDYNE. 4 residues coordinate Zn(2+): Cys-9, Cys-12, Cys-27, and Cys-30. ATP is bound by residues Gln-89 and 106-113; that span reads APTGMGKS. The 164-residue stretch at 93 to 256 folds into the Helicase ATP-binding domain; the sequence is VKRIIRGKSF…KLKKQLAKLL (164 aa). The DEAD box motif lies at 213 to 216; that stretch reads DDVD. Residues 636-1624 are topoisomerase I; that stretch reads DLVKSALMIV…LYEEIKRYVR (989 aa). The 164-residue stretch at 640–803 folds into the Toprim domain; sequence SALMIVESPN…NIKRIEFHEV (164 aa). Glu-646 contacts Mg(2+). An RG C-terminal-type zinc finger spans residues 720-749; it reads IKRCRDCGHQFVDWEQKGVCPRCGSRNVHD. Cys-723, Cys-726, Cys-739, and Cys-742 together coordinate Zn(2+). Asp-772 lines the Mg(2+) pocket. Residues 819–1623 form the Topo IA-type catalytic domain; it reads NEDRVNAQLV…ELYEEIKRYV (805 aa). A DOD-type homing endonuclease domain is found at 1107 to 1222; the sequence is IFGVILGKGT…LSVYLYQIGI (116 aa). The active-site O-(5'-phospho-DNA)-tyrosine intermediate is Tyr-1366.

This sequence in the N-terminal section; belongs to the DEAD box helicase family. DDVD subfamily. The protein in the C-terminal section; belongs to the type IA topoisomerase family. As to quaternary structure, monomer. It depends on Zn(2+) as a cofactor. The cofactor is Mg(2+). In terms of processing, this protein undergoes a protein self splicing that involves a post-translational excision of the intervening region (intein) followed by peptide ligation.

It is found in the cytoplasm. The catalysed reaction is ATP + H2O = ADP + phosphate + H(+). In terms of biological role, modifies the topological state of DNA by introducing positive supercoils in an ATP-dependent process, increasing the linking number in steps of +1. Binds to single-stranded DNA, transiently cleaves and then rejoins the ends, introducing a positive supercoil in the process. The scissile phosphodiester is attacked by the catalytic tyrosine of the enzyme, resulting in the formation of a DNA-(5'-phosphotyrosyl)-enzyme intermediate. Probably involved in rewinding DNA strands in regions of the chromosome that have opened up to allow replication, transcription, DNA repair and/or for DNA protection. The sequence is that of Reverse gyrase from Pyrococcus horikoshii (strain ATCC 700860 / DSM 12428 / JCM 9974 / NBRC 100139 / OT-3).